Reading from the N-terminus, the 772-residue chain is Protein U58 (772 aa).

The protein belongs to the herpesviridae UL87 family.

The chain is Protein U58 (U58) from Homo sapiens (Human).